The primary structure comprises 141 residues: Hemoglobin subunit alpha-1 (141 aa).

The region spanning 1–141 (VLSAADKGNV…VSTVLTSKYR (141 aa)) is the Globin domain. Residue His-58 coordinates O2. His-87 serves as a coordination point for heme b.

Belongs to the globin family. In terms of assembly, heterotetramer of two alpha chains and two beta chains. Red blood cells.

Involved in oxygen transport from the lung to the various peripheral tissues. The sequence is that of Hemoglobin subunit alpha-1 from Bos mutus grunniens (Wild yak).